Consider the following 283-residue polypeptide: Elongation factor Ts (283 aa).

An involved in Mg(2+) ion dislocation from EF-Tu region spans residues 79–82 (TDFV).

The protein belongs to the EF-Ts family.

The protein resides in the cytoplasm. In terms of biological role, associates with the EF-Tu.GDP complex and induces the exchange of GDP to GTP. It remains bound to the aminoacyl-tRNA.EF-Tu.GTP complex up to the GTP hydrolysis stage on the ribosome. In Shewanella baltica (strain OS155 / ATCC BAA-1091), this protein is Elongation factor Ts.